We begin with the raw amino-acid sequence, 110 residues long: Phosphoribosyl-ATP pyrophosphatase (110 aa).

The protein belongs to the PRA-PH family.

The protein resides in the cytoplasm. It carries out the reaction 1-(5-phospho-beta-D-ribosyl)-ATP + H2O = 1-(5-phospho-beta-D-ribosyl)-5'-AMP + diphosphate + H(+). It functions in the pathway amino-acid biosynthesis; L-histidine biosynthesis; L-histidine from 5-phospho-alpha-D-ribose 1-diphosphate: step 2/9. This is Phosphoribosyl-ATP pyrophosphatase from Teredinibacter turnerae (strain ATCC 39867 / T7901).